Reading from the N-terminus, the 71-residue chain is Sec-independent protein translocase protein TatA (71 aa).

A helical transmembrane segment spans residues 9 to 29 (LLLILAIVVILFGASRLPALG). Residues 43–71 (FGGEDEKPTASGNGSTPTQSSSDQGSKQA) are disordered. Polar residues predominate over residues 52-71 (ASGNGSTPTQSSSDQGSKQA).

It belongs to the TatA/E family. The Tat system comprises two distinct complexes: a TatABC complex, containing multiple copies of TatA, TatB and TatC subunits, and a separate TatA complex, containing only TatA subunits. Substrates initially bind to the TatABC complex, which probably triggers association of the separate TatA complex to form the active translocon.

It is found in the cell inner membrane. Part of the twin-arginine translocation (Tat) system that transports large folded proteins containing a characteristic twin-arginine motif in their signal peptide across membranes. TatA could form the protein-conducting channel of the Tat system. In Anaeromyxobacter dehalogenans (strain 2CP-C), this protein is Sec-independent protein translocase protein TatA.